The chain runs to 244 residues: Exosome complex component Rrp41 (244 aa).

The protein belongs to the RNase PH family. Rrp41 subfamily. As to quaternary structure, component of the archaeal exosome complex. Forms a hexameric ring-like arrangement composed of 3 Rrp41-Rrp42 heterodimers. The hexameric ring associates with a trimer of Rrp4 and/or Csl4 subunits.

Its subcellular location is the cytoplasm. Functionally, catalytic component of the exosome, which is a complex involved in RNA degradation. Has 3'-&gt;5' exoribonuclease activity. Can also synthesize heteromeric RNA-tails. This Nitrosopumilus maritimus (strain SCM1) protein is Exosome complex component Rrp41.